The sequence spans 239 residues: Small ribosomal subunit protein uS2 (239 aa).

The protein belongs to the universal ribosomal protein uS2 family.

This Francisella philomiragia subsp. philomiragia (strain ATCC 25017 / CCUG 19701 / FSC 153 / O#319-036) protein is Small ribosomal subunit protein uS2.